The sequence spans 229 residues: 7-cyano-7-deazaguanine synthase (229 aa).

9 to 19 contacts ATP; the sequence is YSGGLDSTTCM. Positions 189, 199, 202, and 205 each coordinate Zn(2+).

The protein belongs to the QueC family. Zn(2+) serves as cofactor.

The catalysed reaction is 7-carboxy-7-deazaguanine + NH4(+) + ATP = 7-cyano-7-deazaguanine + ADP + phosphate + H2O + H(+). It functions in the pathway purine metabolism; 7-cyano-7-deazaguanine biosynthesis. Its function is as follows. Catalyzes the ATP-dependent conversion of 7-carboxy-7-deazaguanine (CDG) to 7-cyano-7-deazaguanine (preQ(0)). The polypeptide is 7-cyano-7-deazaguanine synthase (Geotalea daltonii (strain DSM 22248 / JCM 15807 / FRC-32) (Geobacter daltonii)).